The chain runs to 459 residues: MLKIYNSLTRQKEEFKPIVAGKVGMYVCGVTIYDLCHIGHGRTFVSFDVVARYLRYLGYDLTFVRNITDIDDKIIKRAAENAETCESLTERLIQEMYADFDALNIKRPDVEPRATAYIEEIIALVERLIERGFAYVADNGDVMFEVSQYSEYGKLSKQDLDQLQAGARVDIEAAKRSPLDFVLWKMSKPGEPTWESPWGSGRPGWHIECSAMNSSILGTHFDIHGGGSDLQFPHHENEIAQSCCAHDTQYVNTWMHSGMVMVDKEKMSKSLGNFFTIRDVLGHYDAETVRYFLMSGHYRSQLNYSEENLNQARASLERLYNALRGLDRSVPAAGGEEYVTRFTAAMNDDFNTPEAYSVLFDMAREINRLKSEDMTNASALGSLMRELADVIGILYQEPEAFFQGSAEDEDAAQIEALIKLRNDSRATKDWANADLARDKLNEMGIVLEDGPNGTTWRRK.

A Zn(2+)-binding site is contributed by cysteine 28. Residues 30 to 40 carry the 'HIGH' region motif; it reads VTIYDLCHIGH. Residues cysteine 209, histidine 234, and glutamate 238 each coordinate Zn(2+). The 'KMSKS' region motif lies at 266-270; that stretch reads KMSKS. An ATP-binding site is contributed by lysine 269.

Belongs to the class-I aminoacyl-tRNA synthetase family. Monomer. Zn(2+) serves as cofactor.

The protein localises to the cytoplasm. The enzyme catalyses tRNA(Cys) + L-cysteine + ATP = L-cysteinyl-tRNA(Cys) + AMP + diphosphate. This Vibrio cholerae serotype O1 (strain ATCC 39541 / Classical Ogawa 395 / O395) protein is Cysteine--tRNA ligase.